The primary structure comprises 363 residues: Histidinol-phosphate aminotransferase (363 aa).

Lysine 220 is modified (N6-(pyridoxal phosphate)lysine).

This sequence belongs to the class-II pyridoxal-phosphate-dependent aminotransferase family. Histidinol-phosphate aminotransferase subfamily. In terms of assembly, homodimer. Pyridoxal 5'-phosphate serves as cofactor.

It carries out the reaction L-histidinol phosphate + 2-oxoglutarate = 3-(imidazol-4-yl)-2-oxopropyl phosphate + L-glutamate. It functions in the pathway amino-acid biosynthesis; L-histidine biosynthesis; L-histidine from 5-phospho-alpha-D-ribose 1-diphosphate: step 7/9. This chain is Histidinol-phosphate aminotransferase, found in Chlorobium chlorochromatii (strain CaD3).